The sequence spans 247 residues: ATP synthase subunit a, chloroplastic (247 aa).

The next 5 helical transmembrane spans lie at 38 to 58 (QVLI…ILVV), 95 to 115 (VPFI…GALL), 134 to 154 (INTT…AGIS), 199 to 219 (LVVV…VMFL), and 220 to 240 (GLFT…AYIG).

Belongs to the ATPase A chain family. As to quaternary structure, F-type ATPases have 2 components, CF(1) - the catalytic core - and CF(0) - the membrane proton channel. CF(1) has five subunits: alpha(3), beta(3), gamma(1), delta(1), epsilon(1). CF(0) has four main subunits: a, b, b' and c.

It is found in the plastid. The protein localises to the chloroplast thylakoid membrane. Key component of the proton channel; it plays a direct role in the translocation of protons across the membrane. This chain is ATP synthase subunit a, chloroplastic, found in Pisum sativum (Garden pea).